We begin with the raw amino-acid sequence, 382 residues long: Alkanesulfonate monooxygenase (382 aa).

It belongs to the SsuD family. In terms of assembly, homotetramer.

The enzyme catalyses an alkanesulfonate + FMNH2 + O2 = an aldehyde + FMN + sulfite + H2O + 2 H(+). In terms of biological role, catalyzes the desulfonation of aliphatic sulfonates. The sequence is that of Alkanesulfonate monooxygenase from Yersinia pseudotuberculosis serotype IB (strain PB1/+).